The sequence spans 186 residues: Large ribosomal subunit protein uL16 (186 aa).

Belongs to the universal ribosomal protein uL16 family.

This chain is Large ribosomal subunit protein uL16, found in Nanoarchaeum equitans (strain Kin4-M).